We begin with the raw amino-acid sequence, 113 residues long: MSAIQNLHSFDPFADASKGDDLLPAGTEDYIHIRIQQRNGRKTLTTVQGIADDYDKKKLVKAFKKKFACNGTVIEHPEYGEVIQLQGDQRKNICQFLVEIGLAKDDQLKVHGF.

Ser2 carries the N-acetylserine modification. A phosphoserine mark is found at Ser2 and Ser9.

It belongs to the SUI1 family. In terms of assembly, component of the 43S pre-initiation complex (43S PIC), which is composed of the 40S ribosomal subunit, EIF1, eIF1A (EIF1AX), eIF3 complex, EIF5 and eIF2-GTP-initiator tRNA complex (eIF2 ternary complex). Interacts with EIF4G1; in specific 5'-UTR length and AUG context. Interacts with EIF5; which in a mutual exclusive interaction associates either with EIF1 or with EIF2S2 on a common binding site. Interacts with RENT2.

The protein resides in the cytoplasm. In terms of biological role, component of the 43S pre-initiation complex (43S PIC), which binds to the mRNA cap-proximal region, scans mRNA 5'-untranslated region, and locates the initiation codon. Together with eIF1A (EIF1AX), EIF1 facilitates scanning and is essential for start codon recognition on the basis of AUG nucleotide context and location relative to the 5'-cap. Participates to initiation codon selection by influencing the conformation of the 40S ribosomal subunit and the positions of bound mRNA and initiator tRNA; this is possible after its binding to the interface surface of the platform of the 40S ribosomal subunit close to the P-site. Together with eIF1A (EIF1AX), also regulates the opening and closing of the mRNA binding channel, which ensures mRNA recruitment, scanning and the fidelity of initiation codon selection. Continuously monitors and protects against premature and partial base-pairing of codons in the 5'-UTR with the anticodon of initiator tRNA. Together with eIF1A (EIF1AX), acts for ribosomal scanning, promotion of the assembly of 48S complex at the initiation codon (43S PIC becomes 48S PIC after the start codon is reached), and dissociation of aberrant complexes. Interacts with EIF4G1, which in a mutual exclusive interaction associates either with EIF1 or with EIF4E on a common binding site. EIF4G1-EIF1 complex promotes ribosome scanning (on both short and long 5'UTR), leaky scanning (on short 5'UTR) which is the bypass of the initial start codon, and discrimination against cap-proximal AUG. Is probably maintained within the 43S PIC in open conformation thanks to EIF1A-EIF5 interaction. Once the correct start codon is reached, EIF1 is physically excluded from the decoding site, shifting the PIC into the closed conformation and arresting it at the start codon. This is Eukaryotic translation initiation factor 1 (EIF1) from Bos taurus (Bovine).